The primary structure comprises 677 residues: MAKCRVRVSTGEACGAGTWDKVSVSIVGTHGESPLVPLDHLGKEFSAGAEEDFEVTLPQDVGTVLMLRVHKAPPEVSLPLMSFRSDAWFCRWFELEWLPGAALHFPCYQWLEGAGELVLREGAAKVSWQDHHPTLQDQRQKELESRQKMYSWKTYIEGWPRCLDHETVKDLDLNIKYSAMKNAKLFFKAHSAYTELKVKGLLDRTGLWRSLREMRRLFNFRKTPAAEYVFAHWQEDAFFASQFLNGINPVLIRRCHSLPNNFPVTDEMVAPVLGPGTSLQAELEKGSLFLVDHGILSGVHTNILNGKPQFSAAPMTLLHQSSGSGPLLPIAIQLKQTPGPDNPIFLPSDDTWDWLLAKTWVRNSEFYIHEAVTHLLHAHLIPEVFALATLRQLPRCHPLFKLLIPHIRYTLHINTLARELLVAPGKLIDKSTGLGTGGFSDLIKRNMEQLNYSVLCLPEDIRARGVEDIPGYYYRDDGMQIWGAIKSFVSEIVSIYYPSDTSVQDDQELQAWVREIFSEGFLGRESSGMPSLLDTREALVQYITMVIFTCSAKHAAVSSGQFDSCVWMPNLPPTMQLPPPTSKGQARPESFIATLPAVNSSSYHIIALWLLSAEPGDQRPLGHYPDEHFTEDAPRRSVAAFQRKLIQISKGIRERNRGLALPYTYLDPPLIENSVSI.

The PLAT domain maps to 2 to 125; sequence AKCRVRVSTG…ELVLREGAAK (124 aa). Ca(2+) contacts are provided by Gly-15, Gly-17, Asp-39, His-40, Gly-42, Glu-44, Asp-86, and Ala-87. Residues 126 to 677 form the Lipoxygenase domain; the sequence is VSWQDHHPTL…PPLIENSVSI (552 aa). Fe cation-binding residues include His-374, His-379, His-554, and Ile-677.

It belongs to the lipoxygenase family. It depends on Fe cation as a cofactor. As to expression, expressed in epidermis and brain. No expression found in heart, spleen, liver, skeletal muscle, kidney or testis.

Its subcellular location is the cytoplasm. The protein resides in the cytosol. It localises to the membrane. It catalyses the reaction (9Z,12Z)-octadecadienoate + O2 = (9S)-hydroperoxy-(10E,12Z)-octadecadienoate. The catalysed reaction is (5Z,8Z,11Z,14Z)-eicosatetraenoate + O2 = (8S)-hydroperoxy-(5Z,9E,11Z,14Z)-eicosatetraenoate. The enzyme catalyses (15S)-hydroperoxy-(5Z,8Z,11Z,13E)-eicosatetraenoate + O2 = (8S,15S)-dihydroperoxy-(5Z,9E,11Z,13E)-eicosatetraenoate. It carries out the reaction (8S)-hydroperoxy-(5Z,9E,11Z,14Z)-eicosatetraenoate + O2 = (8S,15S)-dihydroperoxy-(5Z,9E,11Z,13E)-eicosatetraenoate. It catalyses the reaction 1-octadecanoyl-2-(5Z,8Z,11Z,14Z-eicosatetraenoyl)-sn-glycero-3-phosphocholine + O2 = 1-octadecanoyl-2-(15-hydroperoxy-5Z,8Z,11Z,13E-eicosatetraenoyl)-sn-glycero-3-phosphocholine. The catalysed reaction is a 1-acyl-2-(5Z,8Z,11Z,14Z-eicosatetraenoyl)-sn-glycero-3-phospho-(1D-myo-inositol) + O2 = a 1-acyl-2-(15-hydroperoxy-5Z,8Z,11Z,13E-eicosatetraenoyl)-sn-glycero-3-phospho-(1D-myo-inositol). The enzyme catalyses a 1-acyl-2-(8Z,11Z,14Z-eicosatrienoyl)-sn-glycero-3-phospho-(1D-myo-inositol) + O2 = a 1-acyl-2-(15-hydroperoxy-8Z,11Z,13E-eicosatrienoyl)-sn-glycero-3-phospho-(1D-myo-inositol). It carries out the reaction (5Z,8Z,11Z,14Z)-eicosatetraenoate + O2 = 9-hydroperoxy-(5Z,7E,11Z,14Z)-eicosatetraenoate. It catalyses the reaction (5Z,8Z,11Z,14Z)-eicosatetraenoate + O2 = 11-hydroperoxy-(5Z,8Z,12E,14Z)-eicosatetraenoate. The catalysed reaction is (8Z,11Z,14Z)-eicosatrienoate + O2 = 15-hydroperoxy-(8Z,11Z,13E)-eicosatrienoate. It participates in lipid metabolism; hydroperoxy eicosatetraenoic acid biosynthesis. Functionally, non-heme iron-containing dioxygenase that catalyzes the stereo-specific peroxidation of free and esterified polyunsaturated fatty acids generating a spectrum of bioactive lipid mediators. Catalyzes the peroxidation of arachidonate and linoleate into (8S)-HPETE and (9S)-HPODE respectively. In addition to generate (8S)-HPETE from free arachidonic acid (AA), may produce other HETE isomers from phospholipid-esterified polyunsaturated fatty acids and minor products derived from (8S)-HPETE itself that may include leukotriene A4 and 8,15-diHPETE. With free arachidonate as substrate, has no detectable 15S-lipoxygenase activity and only displays a 8S-lipoxygenase activity. However may have a 15S-lipoxygenase activity with (8S)-HPETE to produce (8S,15S)-diHPETE and when oxidizes directly arachidonic acid esterified to membrane-bound phospholipids to produce a phospholipid-esterified 15-HpETE. May also catalyze (15S)-HPETE peroxidation to produce 8,15-diHPETE. May play a role in keratinocyte differentiation through activation of the peroxisome proliferator activated receptor signaling pathway. This chain is Polyunsaturated fatty acid lipoxygenase ALOX8, found in Mus musculus (Mouse).